Here is a 184-residue protein sequence, read N- to C-terminus: FMRFamide-related peptides (184 aa).

Residues 1–44 (MLVSSSVLKDDSSLRIFKESPNEFEYIIKRHDMDDRKEDTESKE) constitute a propeptide that is removed on maturation. Phe56 is subject to Phenylalanine amide. Positions 59–83 (GQSFFNNLDNSAFDNEIDSKVSRHP) are excised as a propeptide. At Phe94 the chain carries Phenylalanine amide. A propeptide spanning residues 97-107 (SGMKSTNDEQP) is cleaved from the precursor. A Phenylalanine amide modification is found at Phe119. The propeptide occupies 122-184 (NIQIVPTDFD…SLETNSNHRE (63 aa)).

The protein belongs to the FARP (FMRFamide related peptide) family. In terms of tissue distribution, expressed throughout the central nervous system.

The protein resides in the secreted. In insects, FMRFamide and related peptides have modulatory actions at skeletal neuromuscular junctions, and peptides that are immunologically related to FMRFamide are released into the circulation from neurohemal organs. The chain is FMRFamide-related peptides from Camponotus floridanus (Florida carpenter ant).